Consider the following 242-residue polypeptide: Aquaporin (242 aa).

Over 1 to 11 (MNTSTKLICQK) the chain is Cytoplasmic. Residues 12 to 32 (LFAEMLCSCIFGFAVYSAILN) traverse the membrane as a helical segment. Residues 33–39 (TKASNSS) lie on the Extracellular side of the membrane. Residues 40 to 60 (ISSTTVGLTVCFSSISLIYTF) form a helical membrane-spanning segment. At 61-83 (CDHSVAHFNPAITIAAICTGKLD) the chain is on the cytoplasmic side. Residues 69-71 (NPA) carry the NPA motif. The helical transmembrane segment at 84–104 (ILLGIGYVIAQLIGFILATLL) threads the bilayer. Residues 105–133 (TVVCFPYGYLKTMEFIASARISDDISTVN) lie on the Extracellular side of the membrane. A helical membrane pass occupies residues 134–154 (LFFTEFILSFILVFIAFEVGI). At 155–175 (NAIREPGVTLFVGIKQIDRSK) the chain is on the cytoplasmic side. A helical membrane pass occupies residues 176-196 (FAPLTIGITLGFLAFLASTTS). At 197–217 (GGAFNPGIVWGPAIMGGNFDD) the chain is on the extracellular side. The NPG signature appears at 201–203 (NPG). The chain crosses the membrane as a helical span at residues 218-238 (FVIYIISELSGGLLGAFIQVF). Topologically, residues 239 to 242 (LLFK) are cytoplasmic.

This sequence belongs to the MIP/aquaporin (TC 1.A.8) family.

It is found in the cell membrane. In terms of biological role, water channel required to facilitate the transport of water across membranes. Involved in osmotolerance. This chain is Aquaporin (AQP), found in Enterocytozoon bieneusi (strain H348) (Microsporidian parasite).